The chain runs to 295 residues: Sulfotransferase 1A2 (295 aa).

48–53 (KSGTTW) contributes to the 3'-phosphoadenylyl sulfate binding site. 106 to 108 (KTH) provides a ligand contact to substrate. The active-site Proton acceptor is H108. Residues R130, S138, Y193, 227–232 (TSFKEM), and 255–259 (FMRKG) each bind 3'-phosphoadenylyl sulfate.

It belongs to the sulfotransferase 1 family. In terms of assembly, homodimer.

The protein localises to the cytoplasm. It carries out the reaction a phenol + 3'-phosphoadenylyl sulfate = an aryl sulfate + adenosine 3',5'-bisphosphate + H(+). Sulfotransferase that utilizes 3'-phospho-5'-adenylyl sulfate (PAPS) as sulfonate donor to catalyze the sulfate conjugation of catecholamines, phenolic drugs and neurotransmitters. Is also responsible for the sulfonation and activation of minoxidil. Mediates the metabolic activation of carcinogenic N-hydroxyarylamines to DNA binding products and could so participate as modulating factor of cancer risk. The protein is Sulfotransferase 1A2 (SULT1A2) of Homo sapiens (Human).